Reading from the N-terminus, the 98-residue chain is NADH-ubiquinone oxidoreductase chain 4L (98 aa).

The next 3 membrane-spanning stretches (helical) occupy residues 1–21, 29–49, and 59–79; these read MTPV…GLAF, ALLC…LWAL, and APML…ALLV.

Belongs to the complex I subunit 4L family.

Its subcellular location is the mitochondrion membrane. It catalyses the reaction a ubiquinone + NADH + 5 H(+)(in) = a ubiquinol + NAD(+) + 4 H(+)(out). Functionally, core subunit of the mitochondrial membrane respiratory chain NADH dehydrogenase (Complex I) which catalyzes electron transfer from NADH through the respiratory chain, using ubiquinone as an electron acceptor. Part of the enzyme membrane arm which is embedded in the lipid bilayer and involved in proton translocation. This Carassius auratus (Goldfish) protein is NADH-ubiquinone oxidoreductase chain 4L (MT-ND4L).